The following is a 220-amino-acid chain: Adenylate kinase (220 aa).

Glycine 10 to threonine 15 contributes to the ATP binding site. Residues serine 30–valine 59 form an NMP region. AMP is bound by residues threonine 31, arginine 36, lysine 57–valine 59, glycine 85–arginine 88, and glutamine 92. Positions glycine 122 to aspartate 159 are LID. ATP-binding positions include arginine 123 and threonine 132 to tyrosine 133. AMP is bound by residues arginine 156 and arginine 167. Glycine 206 serves as a coordination point for ATP.

The protein belongs to the adenylate kinase family. Monomer.

It is found in the cytoplasm. It catalyses the reaction AMP + ATP = 2 ADP. It functions in the pathway purine metabolism; AMP biosynthesis via salvage pathway; AMP from ADP: step 1/1. Catalyzes the reversible transfer of the terminal phosphate group between ATP and AMP. Plays an important role in cellular energy homeostasis and in adenine nucleotide metabolism. In Burkholderia ambifaria (strain ATCC BAA-244 / DSM 16087 / CCUG 44356 / LMG 19182 / AMMD) (Burkholderia cepacia (strain AMMD)), this protein is Adenylate kinase.